The sequence spans 94 residues: Small ribosomal subunit protein uS19 (94 aa).

Belongs to the universal ribosomal protein uS19 family.

Its function is as follows. Protein S19 forms a complex with S13 that binds strongly to the 16S ribosomal RNA. In Finegoldia magna (strain ATCC 29328 / DSM 20472 / WAL 2508) (Peptostreptococcus magnus), this protein is Small ribosomal subunit protein uS19.